The following is a 366-amino-acid chain: Hydroxyproline O-arabinosyltransferase 1 (366 aa).

Residues 6–26 (TLFYPLLITLSVALITYNIII) form a helical; Signal-anchor membrane-spanning segment.

As to expression, ubiquitous.

The protein resides in the golgi apparatus. Its subcellular location is the cis-Golgi network membrane. The enzyme catalyses trans-4-hydroxy-L-prolyl-[protein] + UDP-beta-L-arabinofuranose = O-(beta-L-arabinofuranosyl)-trans-4-hydroxy-L-prolyl-[protein] + UDP + H(+). In terms of biological role, glycosyltransferase involved in the O-arabinosylation of several proteins including extensins and small signaling peptides. Catalyzes the transfer of the initial L-arabinose to the hydroxyl group of Hyp residues. Contributes redundantly with HPAT2 and HPAT3 to arabinosylation of EXT3. This is Hydroxyproline O-arabinosyltransferase 1 from Arabidopsis thaliana (Mouse-ear cress).